The primary structure comprises 445 residues: Exodeoxyribonuclease 7 large subunit (445 aa).

It belongs to the XseA family. As to quaternary structure, heterooligomer composed of large and small subunits.

Its subcellular location is the cytoplasm. It carries out the reaction Exonucleolytic cleavage in either 5'- to 3'- or 3'- to 5'-direction to yield nucleoside 5'-phosphates.. Its function is as follows. Bidirectionally degrades single-stranded DNA into large acid-insoluble oligonucleotides, which are then degraded further into small acid-soluble oligonucleotides. In Staphylococcus haemolyticus (strain JCSC1435), this protein is Exodeoxyribonuclease 7 large subunit.